The following is a 128-amino-acid chain: Probable 4-amino-4-deoxy-L-arabinose-phosphoundecaprenol flippase subunit ArnF (128 aa).

The Cytoplasmic portion of the chain corresponds to methionine 1 to cysteine 2. A helical membrane pass occupies residues leucine 3–alanine 23. Over alanine 24 to aspartate 35 the chain is Periplasmic. The helical transmembrane segment at phenylalanine 36 to glycine 56 threads the bilayer. Over tyrosine 57–alanine 76 the chain is Cytoplasmic. A helical membrane pass occupies residues tyrosine 77–tryptophan 97. Over glutamate 98–threonine 100 the chain is Periplasmic. Residues phenylalanine 101–leucine 121 form a helical membrane-spanning segment. The Cytoplasmic portion of the chain corresponds to proline 122–tyrosine 128.

Belongs to the ArnF family. In terms of assembly, heterodimer of ArnE and ArnF.

The protein localises to the cell inner membrane. It functions in the pathway bacterial outer membrane biogenesis; lipopolysaccharide biosynthesis. Its function is as follows. Translocates 4-amino-4-deoxy-L-arabinose-phosphoundecaprenol (alpha-L-Ara4N-phosphoundecaprenol) from the cytoplasmic to the periplasmic side of the inner membrane. This chain is Probable 4-amino-4-deoxy-L-arabinose-phosphoundecaprenol flippase subunit ArnF, found in Shigella flexneri.